Reading from the N-terminus, the 662-residue chain is Acetyl-coenzyme A synthetase (662 aa).

CoA contacts are provided by residues 197-200 and Thr-317; that span reads RKGK. ATP is bound by residues 393–395, 417–422, Asp-510, and Arg-525; these read GEP and DTWWQT. Ser-533 provides a ligand contact to CoA. Arg-536 is an ATP binding site. The Mg(2+) site is built by His-549 and Val-552. Residue Lys-623 is modified to N6-acetyllysine.

It belongs to the ATP-dependent AMP-binding enzyme family. Requires Mg(2+) as cofactor. Acetylated. Deacetylation by the SIR2-homolog deacetylase activates the enzyme.

It carries out the reaction acetate + ATP + CoA = acetyl-CoA + AMP + diphosphate. Functionally, catalyzes the conversion of acetate into acetyl-CoA (AcCoA), an essential intermediate at the junction of anabolic and catabolic pathways. AcsA undergoes a two-step reaction. In the first half reaction, AcsA combines acetate with ATP to form acetyl-adenylate (AcAMP) intermediate. In the second half reaction, it can then transfer the acetyl group from AcAMP to the sulfhydryl group of CoA, forming the product AcCoA. The polypeptide is Acetyl-coenzyme A synthetase (Helicobacter pylori (strain HPAG1)).